The sequence spans 427 residues: Gustatory receptor for sugar taste 43a (427 aa).

Residues 1 to 37 are Cytoplasmic-facing; that stretch reads MEISQPSIGIFYISKVLALAPYATVRNSKGRVEIGRS. A helical membrane pass occupies residues 38–63; sequence WLFTVYSATLTVVMVFLTYRGLLFDA. Over 64-75 the chain is Extracellular; the sequence is NSEIPVRMKSAT. Beta-D-fructose-binding residues include Arg70 and Asp83. The helical transmembrane segment at 76-96 threads the bilayer; the sequence is SKVVTALDVSVVVMAIVSGVY. Residues 97 to 135 are Cytoplasmic-facing; sequence CGLFSLNDTLELNDRLNKIDNTLNAYNNFRRDRWRALGM. Residues 136–158 form a helical membrane-spanning segment; the sequence is AAVSLLAISILVGLDVGTWMRIA. The Extracellular segment spans residues 159–168; that stretch reads QDMNIAQSDT. A helical membrane pass occupies residues 169-193; it reads ELNVHWYIPFYSLYFILTGLQVNIA. Residue Tyr182 participates in beta-D-fructose binding. The Cytoplasmic segment spans residues 194 to 293; sequence NTAYGLGRRF…CVHLLSNSFG (100 aa). A helical transmembrane segment spans residues 294-316; sequence IAVLFILVSCLLHLVATAYFLFL. Thr310 lines the beta-D-fructose pocket. The Extracellular portion of the chain corresponds to 317–324; the sequence is ELLSKRDN. The chain crosses the membrane as a helical span at residues 325-346; sequence GYLWVQMLWICFHFLRLLMVVE. His337 is a binding site for beta-D-fructose. Residues 347 to 402 are Cytoplasmic-facing; the sequence is PCHLAARESRKTIQIVCEIERKVHEPILAEAVKKFWQQLLVVDADFSACGLCRVNR. A helical membrane pass occupies residues 403–423; sequence TILTSFASAIATYLVILIQFQ. Residue Gln421 coordinates Ca(2+). Residues 424-427 lie on the Extracellular side of the membrane; that stretch reads RTNG.

It belongs to the insect chemoreceptor superfamily. Gustatory receptor (GR) family. Gr21a subfamily. Homotetramer. As to expression, expressed in the adult labellar chemosensory neurons and in the adult head, abdomen, leg and wing. In larvae, is expressed in taste organs, as well as the brain and the gastrointestinal system.

The protein localises to the cell membrane. Gustatory receptor which mediates acceptance or avoidance behavior, depending on its substrates. Gr43a is the main sugar receptor in larvae. Functions as a narrowly tuned fructose receptor in taste neurons but also as a fructose receptor in the brain. Necessary and sufficient to sense hemolymph fructose and promote feeding in hungry flies but suppress feeding in satiated flies. In Drosophila melanogaster (Fruit fly), this protein is Gustatory receptor for sugar taste 43a (Gr43a).